A 427-amino-acid chain; its full sequence is Glutamate-1-semialdehyde 2,1-aminomutase (427 aa).

Lysine 265 carries the post-translational modification N6-(pyridoxal phosphate)lysine.

It belongs to the class-III pyridoxal-phosphate-dependent aminotransferase family. HemL subfamily. In terms of assembly, homodimer. Requires pyridoxal 5'-phosphate as cofactor.

Its subcellular location is the cytoplasm. It carries out the reaction (S)-4-amino-5-oxopentanoate = 5-aminolevulinate. It functions in the pathway porphyrin-containing compound metabolism; protoporphyrin-IX biosynthesis; 5-aminolevulinate from L-glutamyl-tRNA(Glu): step 2/2. This Pseudomonas fluorescens (strain Pf0-1) protein is Glutamate-1-semialdehyde 2,1-aminomutase.